Here is a 541-residue protein sequence, read N- to C-terminus: Threonine--tRNA ligase catalytic subunit (541 aa).

The segment at 135 to 429 (DHRIIGERMD…LLEHFRGKLP (295 aa)) is catalytic. Zn(2+)-binding residues include C227, H278, and H406.

It belongs to the class-II aminoacyl-tRNA synthetase family. As to quaternary structure, homodimer. Probably interacts with its editing subunit. It depends on Zn(2+) as a cofactor.

The protein resides in the cytoplasm. The catalysed reaction is tRNA(Thr) + L-threonine + ATP = L-threonyl-tRNA(Thr) + AMP + diphosphate + H(+). Its function is as follows. Catalyzes the attachment of threonine to tRNA(Thr) in a two-step reaction: L-threonine is first activated by ATP to form Thr-AMP and then transferred to the acceptor end of tRNA(Thr). Also activates L-serine and transfers it to tRNA(Thr) but cannot deacylate incorrectly charged amino acid; unlike most archaea the editing function is found in a freestanding protein. This is Threonine--tRNA ligase catalytic subunit from Metallosphaera sedula (strain ATCC 51363 / DSM 5348 / JCM 9185 / NBRC 15509 / TH2).